Here is a 262-residue protein sequence, read N- to C-terminus: Purine nucleoside phosphorylase SSP1584 (262 aa).

Zn(2+) is bound by residues His-79, Cys-124, and His-141.

It belongs to the purine nucleoside phosphorylase YfiH/LACC1 family. Homodimer. Cu(2+) serves as cofactor. It depends on Zn(2+) as a cofactor.

The catalysed reaction is adenosine + phosphate = alpha-D-ribose 1-phosphate + adenine. It carries out the reaction S-methyl-5'-thioadenosine + phosphate = 5-(methylsulfanyl)-alpha-D-ribose 1-phosphate + adenine. The enzyme catalyses inosine + phosphate = alpha-D-ribose 1-phosphate + hypoxanthine. It catalyses the reaction adenosine + H2O + H(+) = inosine + NH4(+). Purine nucleoside enzyme that catalyzes the phosphorolysis of adenosine and inosine nucleosides, yielding D-ribose 1-phosphate and the respective free bases, adenine and hypoxanthine. Also catalyzes the phosphorolysis of S-methyl-5'-thioadenosine into adenine and S-methyl-5-thio-alpha-D-ribose 1-phosphate. Also has adenosine deaminase activity. This Staphylococcus saprophyticus subsp. saprophyticus (strain ATCC 15305 / DSM 20229 / NCIMB 8711 / NCTC 7292 / S-41) protein is Purine nucleoside phosphorylase SSP1584.